The sequence spans 399 residues: Bifunctional enzyme IspD/IspF (399 aa).

The tract at residues 1–235 (METWALILAA…MVEQPKTTVP (235 aa)) is 2-C-methyl-D-erythritol 4-phosphate cytidylyltransferase. Positions 236–399 (IVGYGYDVHK…IVIVTAIRIS (164 aa)) are 2-C-methyl-D-erythritol 2,4-cyclodiphosphate synthase. Residues Asp242 and His244 each contribute to the a divalent metal cation site. Residues 242–244 (DVH) and 275–276 (HS) contribute to the 4-CDP-2-C-methyl-D-erythritol 2-phosphate site. His283 contacts a divalent metal cation. 4-CDP-2-C-methyl-D-erythritol 2-phosphate-binding positions include 297 to 299 (DIG), 302 to 306 (FPDSD), 373 to 376 (TTEE), and Phe380.

This sequence in the N-terminal section; belongs to the IspD/TarI cytidylyltransferase family. IspD subfamily. The protein in the C-terminal section; belongs to the IspF family. A divalent metal cation is required as a cofactor.

It carries out the reaction 2-C-methyl-D-erythritol 4-phosphate + CTP + H(+) = 4-CDP-2-C-methyl-D-erythritol + diphosphate. The catalysed reaction is 4-CDP-2-C-methyl-D-erythritol 2-phosphate = 2-C-methyl-D-erythritol 2,4-cyclic diphosphate + CMP. Its pathway is isoprenoid biosynthesis; isopentenyl diphosphate biosynthesis via DXP pathway; isopentenyl diphosphate from 1-deoxy-D-xylulose 5-phosphate: step 2/6. The protein operates within isoprenoid biosynthesis; isopentenyl diphosphate biosynthesis via DXP pathway; isopentenyl diphosphate from 1-deoxy-D-xylulose 5-phosphate: step 4/6. Bifunctional enzyme that catalyzes the formation of 4-diphosphocytidyl-2-C-methyl-D-erythritol from CTP and 2-C-methyl-D-erythritol 4-phosphate (MEP) (IspD), and catalyzes the conversion of 4-diphosphocytidyl-2-C-methyl-D-erythritol 2-phosphate (CDP-ME2P) to 2-C-methyl-D-erythritol 2,4-cyclodiphosphate (ME-CPP) with a corresponding release of cytidine 5-monophosphate (CMP) (IspF). This is Bifunctional enzyme IspD/IspF from Lawsonia intracellularis (strain PHE/MN1-00).